Here is a 77-residue protein sequence, read N- to C-terminus: Acyl carrier protein (77 aa).

The 77-residue stretch at 1-77 (MSVEAKVKKI…DAIEYIRKKS (77 aa)) folds into the Carrier domain. Ser-37 carries the post-translational modification O-(pantetheine 4'-phosphoryl)serine.

The protein belongs to the acyl carrier protein (ACP) family. Post-translationally, 4'-phosphopantetheine is transferred from CoA to a specific serine of apo-ACP by AcpS. This modification is essential for activity because fatty acids are bound in thioester linkage to the sulfhydryl of the prosthetic group.

It is found in the cytoplasm. It participates in lipid metabolism; fatty acid biosynthesis. Functionally, carrier of the growing fatty acid chain in fatty acid biosynthesis. The polypeptide is Acyl carrier protein (Desulforapulum autotrophicum (strain ATCC 43914 / DSM 3382 / VKM B-1955 / HRM2) (Desulfobacterium autotrophicum)).